The following is a 559-amino-acid chain: 2-isopropylmalate synthase (559 aa).

In terms of domain architecture, Pyruvate carboxyltransferase spans 33–307 (PIWCSSDLRD…NPDLDFSDID (275 aa)). Mg(2+)-binding residues include Asp42, His246, His248, and Asn282. Positions 439 to 559 (ANTPYALVSH…SLSQPEAKAA (121 aa)) are regulatory domain.

This sequence belongs to the alpha-IPM synthase/homocitrate synthase family. LeuA type 2 subfamily. Homodimer. Requires Mg(2+) as cofactor.

It is found in the cytoplasm. The catalysed reaction is 3-methyl-2-oxobutanoate + acetyl-CoA + H2O = (2S)-2-isopropylmalate + CoA + H(+). Its pathway is amino-acid biosynthesis; L-leucine biosynthesis; L-leucine from 3-methyl-2-oxobutanoate: step 1/4. In terms of biological role, catalyzes the condensation of the acetyl group of acetyl-CoA with 3-methyl-2-oxobutanoate (2-ketoisovalerate) to form 3-carboxy-3-hydroxy-4-methylpentanoate (2-isopropylmalate). The sequence is that of 2-isopropylmalate synthase from Pseudomonas fluorescens (strain Pf0-1).